A 688-amino-acid chain; its full sequence is Glycine--tRNA ligase beta subunit (688 aa).

Belongs to the class-II aminoacyl-tRNA synthetase family. In terms of assembly, tetramer of two alpha and two beta subunits.

The protein localises to the cytoplasm. The enzyme catalyses tRNA(Gly) + glycine + ATP = glycyl-tRNA(Gly) + AMP + diphosphate. The sequence is that of Glycine--tRNA ligase beta subunit from Shewanella oneidensis (strain ATCC 700550 / JCM 31522 / CIP 106686 / LMG 19005 / NCIMB 14063 / MR-1).